The chain runs to 245 residues: Eukaryotic translation initiation factor 3 subunit K (245 aa).

The PCI domain occupies 46 to 227 (YDCYANLALL…EAKGTVVREN (182 aa)).

It belongs to the eIF-3 subunit K family. As to quaternary structure, component of the eukaryotic translation initiation factor 3 (eIF-3) complex.

It localises to the cytoplasm. Functionally, component of the eukaryotic translation initiation factor 3 (eIF-3) complex, which is involved in protein synthesis of a specialized repertoire of mRNAs and, together with other initiation factors, stimulates binding of mRNA and methionyl-tRNAi to the 40S ribosome. The eIF-3 complex specifically targets and initiates translation of a subset of mRNAs involved in cell proliferation. The sequence is that of Eukaryotic translation initiation factor 3 subunit K from Phaeosphaeria nodorum (strain SN15 / ATCC MYA-4574 / FGSC 10173) (Glume blotch fungus).